Reading from the N-terminus, the 316-residue chain is Arginase-1 (316 aa).

Residues 1 to 26 are disordered; sequence MAKERHSVGVIGAPFSKGQPRRGVEE. 4 residues coordinate Mn(2+): histidine 101, aspartate 124, histidine 126, and aspartate 128. Substrate is bound by residues 126-130, 137-139, and aspartate 183; these read HADIN and CGN. Mn(2+) is bound by residues aspartate 232 and aspartate 234. Substrate is bound at residue threonine 246.

It belongs to the arginase family. Homotrimer. The cofactor is Mn(2+). Strongest expression in liver.

The catalysed reaction is L-arginine + H2O = urea + L-ornithine. It participates in nitrogen metabolism; urea cycle; L-ornithine and urea from L-arginine: step 1/1. The chain is Arginase-1 (arg1) from Xenopus laevis (African clawed frog).